The following is a 98-amino-acid chain: Defensin-B (98 aa).

A signal peptide spans 1-20; that stretch reads MKSITVICFLALCTVAITSA. Positions 21–58 are excised as a propeptide; that stretch reads YPQEPVLADEARPFANSLFDELPEETYQAAVENFRLKR. 3 disulfide bridges follow: Cys-61–Cys-88, Cys-74–Cys-94, and Cys-78–Cys-96.

Belongs to the invertebrate defensin family. Type 1 subfamily.

The protein localises to the secreted. Antibacterial peptide mostly active against Gram-positive bacteria. This chain is Defensin-B (DEFB), found in Aedes aegypti (Yellowfever mosquito).